The sequence spans 196 residues: Nucleoid occlusion factor SlmA (196 aa).

Residues 7 to 68 (INRREEILQA…GLIEFIEESL (62 aa)) form the HTH tetR-type domain. Residues 31–50 (TTAKLAKQVGVSEAALYRHF) constitute a DNA-binding region (H-T-H motif). Residues 110–139 (HALMFENERLRDRINQLFERIETSLRQILR) adopt a coiled-coil conformation.

The protein belongs to the nucleoid occlusion factor SlmA family. In terms of assembly, homodimer. Interacts with FtsZ.

The protein resides in the cytoplasm. It localises to the nucleoid. In terms of biological role, required for nucleoid occlusion (NO) phenomenon, which prevents Z-ring formation and cell division over the nucleoid. Acts as a DNA-associated cell division inhibitor that binds simultaneously chromosomal DNA and FtsZ, and disrupts the assembly of FtsZ polymers. SlmA-DNA-binding sequences (SBS) are dispersed on non-Ter regions of the chromosome, preventing FtsZ polymerization at these regions. This Vibrio cholerae serotype O1 (strain ATCC 39315 / El Tor Inaba N16961) protein is Nucleoid occlusion factor SlmA.